A 707-amino-acid polypeptide reads, in one-letter code: Protein SGM1 (707 aa).

Positions 1–11 (MSKKLSLEERL) are enriched in basic and acidic residues. The disordered stretch occupies residues 1-52 (MSKKLSLEERLSLATKKGRKKNKRSTSNLSSPSPVVLSNNEQESARTSIDDA). At Ser2 the chain carries N-acetylserine. The segment covering 27 to 40 (SNLSSPSPVVLSNN) has biased composition (low complexity). Residues 122–473 (VEELVKEISP…KPHQENSNEK (352 aa)) are a coiled coil. Ser151, Ser538, Ser549, Ser568, Ser571, Ser576, and Ser589 each carry phosphoserine. Residues 594–706 (SAHLVNKLST…QQMVEMQGKM (113 aa)) are a coiled coil.

The protein belongs to the SGM1 family. In terms of assembly, interacts with YPT6.

The protein localises to the golgi apparatus. Its function is as follows. Required for normal growth rate on galactose and mannose. This is Protein SGM1 (SGM1) from Saccharomyces cerevisiae (strain ATCC 204508 / S288c) (Baker's yeast).